The following is a 100-amino-acid chain: Putative antiporter subunit mnhF2 (100 aa).

3 helical membrane passes run 5–25, 38–60, and 65–87; these read FTQIFIISALVIFGMALLVCL, VVSFDASSAVVMSIVGVMSVIFN, and LDSIMLIAIISFVSSVSISRFIG.

It belongs to the CPA3 antiporters (TC 2.A.63) subunit F family. May form a heterooligomeric complex that consists of seven subunits: mnhA2, mnhB2, mnhC2, mnhD2, mnhE2, mnhF2 and mnhG2.

It localises to the cell membrane. The sequence is that of Putative antiporter subunit mnhF2 (mnhF2) from Staphylococcus epidermidis (strain ATCC 35984 / DSM 28319 / BCRC 17069 / CCUG 31568 / BM 3577 / RP62A).